A 196-amino-acid chain; its full sequence is Molybdenum cofactor guanylyltransferase (196 aa).

GTP is bound by residues 10-12, Lys-23, Asn-51, Asp-69, and Asp-99; that span reads LAG. Asp-99 contacts Mg(2+).

Belongs to the MobA family. In terms of assembly, monomer. The cofactor is Mg(2+).

It localises to the cytoplasm. It carries out the reaction Mo-molybdopterin + GTP + H(+) = Mo-molybdopterin guanine dinucleotide + diphosphate. Transfers a GMP moiety from GTP to Mo-molybdopterin (Mo-MPT) cofactor (Moco or molybdenum cofactor) to form Mo-molybdopterin guanine dinucleotide (Mo-MGD) cofactor. This is Molybdenum cofactor guanylyltransferase from Shewanella sp. (strain W3-18-1).